The chain runs to 212 residues: Ribonuclease HII (212 aa).

Positions 17–211 (ANLAGIDEAG…VIEALLSLEQ (195 aa)) constitute an RNase H type-2 domain. Positions 23, 24, and 120 each coordinate a divalent metal cation.

Belongs to the RNase HII family. It depends on Mn(2+) as a cofactor. Mg(2+) is required as a cofactor.

The protein localises to the cytoplasm. The catalysed reaction is Endonucleolytic cleavage to 5'-phosphomonoester.. Its function is as follows. Endonuclease that specifically degrades the RNA of RNA-DNA hybrids. The sequence is that of Ribonuclease HII from Chloroflexus aurantiacus (strain ATCC 29364 / DSM 637 / Y-400-fl).